Here is a 147-residue protein sequence, read N- to C-terminus: uncharacterized protein (147 aa).

The 117-residue stretch at 4–120 (KWAKRFFQMA…EQTEDFLSRW (117 aa)) folds into the CMP/dCMP-type deaminase domain. A Zn(2+)-binding site is contributed by H67. E69 serves as the catalytic Proton donor. Zn(2+)-binding residues include C92 and C95.

This sequence belongs to the cytidine and deoxycytidylate deaminase family. It depends on Zn(2+) as a cofactor.

This is an uncharacterized protein from Aliivibrio fischeri (Vibrio fischeri).